We begin with the raw amino-acid sequence, 135 residues long: HVA22-like protein d (135 aa).

3 helical membrane-spanning segments follow: residues 11 to 31 (LHSG…SVIA), 42 to 62 (QWLA…ILQS), and 63 to 83 (LIEW…WLVL).

It belongs to the DP1 family. As to expression, predominantly expressed in flower buds.

It localises to the membrane. In Arabidopsis thaliana (Mouse-ear cress), this protein is HVA22-like protein d (HVA22D).